The chain runs to 850 residues: AdoMet-dependent rRNA methyltransferase SPB1 (850 aa).

G58, W60, D78, D94, and D119 together coordinate S-adenosyl-L-methionine. Catalysis depends on K159, which acts as the Proton acceptor. Residues G273–P282 are compositionally biased toward polar residues. Disordered stretches follow at residues G273–E305, I388–K414, G529–N569, and A620–D646. A compositionally biased stretch (basic and acidic residues) spans I388 to K400. Positions E397 to M425 form a coiled coil. Basic residues predominate over residues A401–N411. Acidic residues-rich tracts occupy residues D537–D561 and S628–V638. Positions L746–D773 form a coiled coil. Positions K811–K850 are disordered. Positions I840–K850 are enriched in basic residues.

Belongs to the class I-like SAM-binding methyltransferase superfamily. RNA methyltransferase RlmE family. SPB1 subfamily. Component of the nucleolar and nucleoplasmic pre-60S ribosomal particle.

Its subcellular location is the nucleus. The protein localises to the nucleolus. The enzyme catalyses a ribonucleotide in rRNA + S-adenosyl-L-methionine = a 2'-O-methylribonucleotide in rRNA + S-adenosyl-L-homocysteine + H(+). Functionally, required for proper assembly of pre-ribosomal particles during the biogenesis of the 60S ribosomal subunit. This is AdoMet-dependent rRNA methyltransferase SPB1 from Yarrowia lipolytica (strain CLIB 122 / E 150) (Yeast).